A 231-amino-acid polypeptide reads, in one-letter code: LexA repressor (231 aa).

The H-T-H motif DNA-binding region spans 28–48 (IREIGEALDIRSTNGVNDHLK). Active-site for autocatalytic cleavage activity residues include Ser149 and Lys186.

This sequence belongs to the peptidase S24 family. As to quaternary structure, homodimer.

The catalysed reaction is Hydrolysis of Ala-|-Gly bond in repressor LexA.. Represses a number of genes involved in the response to DNA damage (SOS response), including recA and lexA. In the presence of single-stranded DNA, RecA interacts with LexA causing an autocatalytic cleavage which disrupts the DNA-binding part of LexA, leading to derepression of the SOS regulon and eventually DNA repair. This chain is LexA repressor, found in Anaeromyxobacter sp. (strain Fw109-5).